Reading from the N-terminus, the 430-residue chain is Aspartate aminotransferase, mitochondrial (430 aa).

The transit peptide at 1–29 (MALLHSGRALPGIAAAFHPGLAAAASARA) directs the protein to the mitochondrion. The residue at position 48 (Thr48) is a Phosphothreonine. Lys59 carries the N6-acetyllysine modification. Position 65 (Gly65) interacts with substrate. Lys73 is modified (N6-acetyllysine; alternate). The residue at position 73 (Lys73) is an N6-succinyllysine; alternate. Position 82 is an N6-acetyllysine (Lys82). Lys90 is modified (N6-acetyllysine; alternate). The residue at position 90 (Lys90) is an N6-succinyllysine; alternate. A 3'-nitrotyrosine; alternate modification is found at Tyr96. Tyr96 is modified (phosphotyrosine; alternate). An N6-acetyllysine; alternate mark is found at Lys107 and Lys122. Residues Lys107 and Lys122 each carry the N6-succinyllysine; alternate modification. Ser143 bears the Phosphoserine mark. At Lys159 the chain carries N6-acetyllysine; alternate. Position 159 is an N6-succinyllysine; alternate (Lys159). Trp162 contributes to the substrate binding site. N6-acetyllysine; alternate is present on Lys185. Lys185 carries the N6-succinyllysine; alternate modification. Asn215 contributes to the substrate binding site. An N6-succinyllysine modification is found at Lys227. The residue at position 234 (Lys234) is an N6-acetyllysine. An N6-acetyllysine; alternate mark is found at Lys279 and Lys296. Residue Lys279 is modified to N6-(pyridoxal phosphate)lysine; alternate. Position 296 is an N6-succinyllysine; alternate (Lys296). Lys302 carries the post-translational modification N6-acetyllysine. Residue Lys309 is modified to N6-acetyllysine; alternate. Lys309 is subject to N6-succinyllysine; alternate. Arg313 is modified (asymmetric dimethylarginine). A Phosphothreonine modification is found at Thr333. Lys338 carries the post-translational modification N6-acetyllysine; alternate. Lys338 carries the post-translational modification N6-succinyllysine; alternate. Lys345 is modified (N6-acetyllysine). N6-acetyllysine; alternate is present on Lys363. The residue at position 363 (Lys363) is an N6-succinyllysine; alternate. An N6-acetyllysine mark is found at Lys364 and Lys387. N6-acetyllysine; alternate is present on residues Lys396 and Lys404. N6-succinyllysine; alternate occurs at positions 396 and 404. Substrate is bound at residue Arg407.

It belongs to the class-I pyridoxal-phosphate-dependent aminotransferase family. In terms of assembly, homodimer. The cofactor is pyridoxal 5'-phosphate.

It is found in the mitochondrion matrix. The protein localises to the cell membrane. It catalyses the reaction L-aspartate + 2-oxoglutarate = oxaloacetate + L-glutamate. The catalysed reaction is L-kynurenine + 2-oxoglutarate = kynurenate + L-glutamate + H2O. In terms of biological role, catalyzes the irreversible transamination of the L-tryptophan metabolite L-kynurenine to form kynurenic acid (KA). As a member of the malate-aspartate shuttle, it has a key role in the intracellular NAD(H) redox balance. Is important for metabolite exchange between mitochondria and cytosol, and for amino acid metabolism. Facilitates cellular uptake of long-chain free fatty acids. This Pongo abelii (Sumatran orangutan) protein is Aspartate aminotransferase, mitochondrial (GOT2).